The sequence spans 275 residues: NH(3)-dependent NAD(+) synthetase (275 aa).

Residue 46-53 coordinates ATP; it reads GISGGQDS. Asp-52 provides a ligand contact to Mg(2+). Deamido-NAD(+) is bound at residue Arg-140. Thr-160 is a binding site for ATP. Position 165 (Glu-165) interacts with Mg(2+). The deamido-NAD(+) site is built by Lys-173 and Asp-180. 2 residues coordinate ATP: Lys-189 and Thr-211. Position 260–261 (260–261) interacts with deamido-NAD(+); that stretch reads HK.

This sequence belongs to the NAD synthetase family. In terms of assembly, homodimer.

It catalyses the reaction deamido-NAD(+) + NH4(+) + ATP = AMP + diphosphate + NAD(+) + H(+). It functions in the pathway cofactor biosynthesis; NAD(+) biosynthesis; NAD(+) from deamido-NAD(+) (ammonia route): step 1/1. In terms of biological role, catalyzes the ATP-dependent amidation of deamido-NAD to form NAD. Uses ammonia as a nitrogen source. The sequence is that of NH(3)-dependent NAD(+) synthetase from Escherichia coli O157:H7.